Consider the following 387-residue polypeptide: Phosphoglycerate kinase (387 aa).

Residues 21–23, Arg36, 59–62, Arg113, and Arg146 each bind substrate; these read DLN and HLGR. ATP contacts are provided by residues Lys197, Glu314, and 340–343; that span reads GGDT.

Belongs to the phosphoglycerate kinase family. As to quaternary structure, monomer.

Its subcellular location is the cytoplasm. It carries out the reaction (2R)-3-phosphoglycerate + ATP = (2R)-3-phospho-glyceroyl phosphate + ADP. It participates in carbohydrate degradation; glycolysis; pyruvate from D-glyceraldehyde 3-phosphate: step 2/5. This chain is Phosphoglycerate kinase, found in Enterobacter sp. (strain 638).